The following is a 337-amino-acid chain: tRNA N6-adenosine threonylcarbamoyltransferase (337 aa).

Residues His111 and His115 each coordinate Fe cation. Residues 134–138 (LVSGG), Asp167, Gly180, and Asn272 contribute to the substrate site. Residue Asp300 participates in Fe cation binding.

The protein belongs to the KAE1 / TsaD family. Fe(2+) is required as a cofactor.

Its subcellular location is the cytoplasm. The catalysed reaction is L-threonylcarbamoyladenylate + adenosine(37) in tRNA = N(6)-L-threonylcarbamoyladenosine(37) in tRNA + AMP + H(+). Required for the formation of a threonylcarbamoyl group on adenosine at position 37 (t(6)A37) in tRNAs that read codons beginning with adenine. Is involved in the transfer of the threonylcarbamoyl moiety of threonylcarbamoyl-AMP (TC-AMP) to the N6 group of A37, together with TsaE and TsaB. TsaD likely plays a direct catalytic role in this reaction. This Escherichia coli O127:H6 (strain E2348/69 / EPEC) protein is tRNA N6-adenosine threonylcarbamoyltransferase.